We begin with the raw amino-acid sequence, 806 residues long: MFVSYRWLQEYVDIKDVTAQELADKITKSGIEVEGVEVLNKGVKGVVVGHVLECEKHPEADKLSKCLIDIGEEEPVQIICGAANIAKGLKVPVAKVGAVLPGNFKIKKAKLRGEASHGMVCALQELGIDGKLVSKEYADGIFIFPSDAEVGADALEILNLHDEVLELGLTPNRADCLNMLGVAYEVAAIYGREVKLPAIDLQETAEKTSDYISVSVEAKEENPLYIAKMVKNVKIGPSPMWMQTRLMAAGIRPISNVVDITNYILMEYGQPLHAFDYDKLGSKEIVVRLAKEGEKIETLDDQERTLQSHHLVITNGTKALAVAGVMGGADSEVTNETVNVLIESAYFAGQTVRRTSKDLGLRSESSARFEKGIDPTRTFEAIQHAAALMAKYAGGEALEGVVEADNLQVQERTVSVTAEKVNRVLGTNISASEMGTMFTNLKFPFTEVEGTFHVNVPARRPDITISEDLVEEVGRLYGYDHIPVTLPSGTMTRGKLTAAQTKRRKVRRFLEGAGLYEAITYSLTSADKAKQYMVEPNEKAPVALALPMSEERSQLRLSLVPQLLEAVSYNVARKNDSVALYEVGSIFLPTEEGELPKEEQHLAGVMTGLALHHAWQGEKKVVDFFVVKGVLEGLFDVLGVSNQITYAPAKREGMHPGRTADIVLDGEVIGFIGQLHPEAEKQLDVKNTFVFELSLVKVFGTDAEETYYSAIPRFPSMTRDMAVVVTKETKAGEMKQVIAEAGGELLKDVTLFDLYEGEKMEEGKKSLAFSMNYFDPERTLTDEEVTEAHNRVLTAVEEKFGAELRK.

Positions 40-155 (NKGVKGVVVG…SDAEVGADAL (116 aa)) constitute a tRNA-binding domain. The B5 domain maps to 409-484 (VQERTVSVTA…RLYGYDHIPV (76 aa)). D462, D468, E471, and E472 together coordinate Mg(2+). One can recognise an FDX-ACB domain in the interval 712–805 (PRFPSMTRDM…VEEKFGAELR (94 aa)).

It belongs to the phenylalanyl-tRNA synthetase beta subunit family. Type 1 subfamily. As to quaternary structure, tetramer of two alpha and two beta subunits. Mg(2+) is required as a cofactor.

It is found in the cytoplasm. The enzyme catalyses tRNA(Phe) + L-phenylalanine + ATP = L-phenylalanyl-tRNA(Phe) + AMP + diphosphate + H(+). The protein is Phenylalanine--tRNA ligase beta subunit of Bacillus cereus (strain ZK / E33L).